The sequence spans 307 residues: Aspartate carbamoyltransferase catalytic subunit (307 aa).

Carbamoyl phosphate contacts are provided by Arg59 and Thr60. Lys87 contributes to the L-aspartate binding site. Carbamoyl phosphate contacts are provided by Arg109, His137, and Gln140. Residues Arg173 and Arg223 each contribute to the L-aspartate site. Positions 266 and 267 each coordinate carbamoyl phosphate.

It belongs to the aspartate/ornithine carbamoyltransferase superfamily. ATCase family. Heterododecamer (2C3:3R2) of six catalytic PyrB chains organized as two trimers (C3), and six regulatory PyrI chains organized as three dimers (R2).

The enzyme catalyses carbamoyl phosphate + L-aspartate = N-carbamoyl-L-aspartate + phosphate + H(+). It functions in the pathway pyrimidine metabolism; UMP biosynthesis via de novo pathway; (S)-dihydroorotate from bicarbonate: step 2/3. Its function is as follows. Catalyzes the condensation of carbamoyl phosphate and aspartate to form carbamoyl aspartate and inorganic phosphate, the committed step in the de novo pyrimidine nucleotide biosynthesis pathway. In Helicobacter pylori (strain G27), this protein is Aspartate carbamoyltransferase catalytic subunit.